The chain runs to 338 residues: POU domain, class 4, transcription factor 3 (338 aa).

The POU-IV box motif lies at 56 to 65 (RAEALAAVDI). The disordered stretch occupies residues 91–112 (TSPTVPISHPAALTSHPHHPVH). The POU-specific domain occupies 179-256 (DVESDPRELE…VLQAWLEEAE (78 aa)). The segment at residues 274–333 (RKRKRTSIAAPEKRSLEAYFAIQPRPSSEKIAAIAEKLDLKKNVVRVWFCNQRQKQKRMK) is a DNA-binding region (homeobox).

This sequence belongs to the POU transcription factor family. In terms of assembly, interacts with ISL1. Expressed in the chochlea of the inner ear.

It localises to the nucleus. The protein localises to the cytoplasm. Its function is as follows. Acts as a transcriptional activator. Acts by binding to sequences related to the consensus octamer motif 5'-ATGCAAAT-3' in the regulatory regions of its target genes. Involved in the auditory system development, required for terminal differentiation of hair cells in the inner ear. The chain is POU domain, class 4, transcription factor 3 from Rattus norvegicus (Rat).